Here is a 468-residue protein sequence, read N- to C-terminus: Homocitrate synthase (468 aa).

In terms of domain architecture, Pyruvate carboxyltransferase spans 11–266 (VGILDSTLRE…IEVVDLKKLS (256 aa)). Arg-19 is a binding site for 2-oxoglutarate. Glu-20 is a binding site for Mg(2+). Positions 83, 143, and 177 each coordinate 2-oxoglutarate. His-205 and His-207 together coordinate Mg(2+). Residue His-299 is the Proton acceptor of the active site.

It belongs to the alpha-IPM synthase/homocitrate synthase family. Homocitrate synthase LYS20/LYS21 subfamily. The cofactor is Mg(2+). It depends on Mn(2+) as a cofactor.

It catalyses the reaction acetyl-CoA + 2-oxoglutarate + H2O = (2R)-homocitrate + CoA + H(+). Its pathway is amino-acid biosynthesis; L-lysine biosynthesis via AAA pathway; L-alpha-aminoadipate from 2-oxoglutarate: step 1/5. Inhibited by lysine. In terms of biological role, catalyzes the aldol-type condensation of 2-oxoglutarate with acetyl-CoA to yield homocitrate. Carries out the first step of the alpha-aminoadipate (AAA) lysine biosynthesis pathway. Does not display 2-isopropylmalate synthase and citramalate synthase activities since it cannot use 2-oxoisovalerate or pyruvate as substrate. This is Homocitrate synthase from Sulfolobus acidocaldarius (strain ATCC 33909 / DSM 639 / JCM 8929 / NBRC 15157 / NCIMB 11770).